A 304-amino-acid chain; its full sequence is UDP-3-O-acyl-N-acetylglucosamine deacetylase (304 aa).

Positions 78, 237, and 241 each coordinate Zn(2+). The active-site Proton donor is the His-264.

This sequence belongs to the LpxC family. Requires Zn(2+) as cofactor.

The enzyme catalyses a UDP-3-O-[(3R)-3-hydroxyacyl]-N-acetyl-alpha-D-glucosamine + H2O = a UDP-3-O-[(3R)-3-hydroxyacyl]-alpha-D-glucosamine + acetate. Its pathway is glycolipid biosynthesis; lipid IV(A) biosynthesis; lipid IV(A) from (3R)-3-hydroxytetradecanoyl-[acyl-carrier-protein] and UDP-N-acetyl-alpha-D-glucosamine: step 2/6. Functionally, catalyzes the hydrolysis of UDP-3-O-myristoyl-N-acetylglucosamine to form UDP-3-O-myristoylglucosamine and acetate, the committed step in lipid A biosynthesis. This is UDP-3-O-acyl-N-acetylglucosamine deacetylase from Xylella fastidiosa (strain Temecula1 / ATCC 700964).